The primary structure comprises 530 residues: MARLFTLSESKYYLMALDAGTGSIRAVIFDLEGNQIAVGQAEWRHLAVPDVPGSMEFDLNKNWQLACECMRQALHNAGIAPEYIAAVSACSMREGIVLYNNEGAPIWACANVDARAAREVSELKELHNNTFENEVYRATGQTLALSAIPRLLWLAHHRSDIYRQASTITMISDWLAYMLSGELAVDPSNAGTTGLLDLTTRDWKPALLDMAGLRADILSPVKETGTLLGVVSSQAAELCGLKAGTPVVVGGGDVQLGCLGLGVVRPAQTAVLGGTFWQQVVNLAAPVTDPEMNVRVNPHVIPGMVQAESISFFTGLTMRWFRDAFCAEEKLIAERLGIDTYTLLEEMASRVPPGSWGVMPIFSDRMRFKTWYHAAPSFINLSIDPDKCNKATLFRALEENAAIVSACNLQQIADFSNIHPSSLVFAGGGSKGKLWSQILADVSGLPVNIPVVKEATALGCAIAAGVGAGIFSSMAETGERLVRWERTHTPDPEKHELYQDSRDKWQAVYQDQLGLVDHGLTTSLWKAPGL.

Belongs to the FGGY kinase family.

It is found in the cytoplasm. The enzyme catalyses (S)-4,5-dihydroxypentane-2,3-dione + ATP = (2S)-2-hydroxy-3,4-dioxopentyl phosphate + ADP + H(+). Its function is as follows. Catalyzes the phosphorylation of autoinducer-2 (AI-2) to phospho-AI-2, which subsequently inactivates the transcriptional regulator LsrR and leads to the transcription of the lsr operon. Phosphorylates the ring-open form of (S)-4,5-dihydroxypentane-2,3-dione (DPD), which is the precursor to all AI-2 signaling molecules, at the C5 position. This is Autoinducer-2 kinase from Escherichia coli (strain K12 / DH10B).